The primary structure comprises 722 residues: Polyribonucleotide nucleotidyltransferase (722 aa).

Mg(2+) is bound by residues aspartate 495 and aspartate 501. The KH domain maps to 562–621; the sequence is PRLLSFRIDPELIGTVIGPGGRTIKGITERTNTKIDIEDGGIVTIASHDGAAAEEAQRII. Residues 631–699 form the S1 motif domain; that stretch reads GEIFPGSITR…NRGRINLTLR (69 aa). Residues 700 to 722 form a disordered region; sequence GVSQNGGMSNYPEPTPTPVAPLT. A compositionally biased stretch (pro residues) spans 712 to 722; that stretch reads EPTPTPVAPLT.

It belongs to the polyribonucleotide nucleotidyltransferase family. Mg(2+) serves as cofactor.

The protein localises to the cytoplasm. The enzyme catalyses RNA(n+1) + phosphate = RNA(n) + a ribonucleoside 5'-diphosphate. Functionally, involved in mRNA degradation. Catalyzes the phosphorolysis of single-stranded polyribonucleotides processively in the 3'- to 5'-direction. The protein is Polyribonucleotide nucleotidyltransferase of Prochlorococcus marinus (strain NATL1A).